The following is a 66-amino-acid chain: Large ribosomal subunit protein bL35 (66 aa).

The segment covering 1 to 15 (MSKMKTKSGAKKRFK) has biased composition (basic residues). The interval 1 to 35 (MSKMKTKSGAKKRFKLTASGKVKAGQAGKRHGMIK) is disordered.

It belongs to the bacterial ribosomal protein bL35 family.

In Maricaulis maris (strain MCS10) (Caulobacter maris), this protein is Large ribosomal subunit protein bL35.